We begin with the raw amino-acid sequence, 155 residues long: MDPEGMMYGFGVSFGISWAILKLFGREKKGKDRPREDGTQQQPSESKGEAACRDAAYRITGKRFEKIRHKGIVNPDTGRALELDCYSKSLKTAIEYQGRQHYEYVSVFHKGGRQDLRKQHERDCYKRAACQKLGIKLIEVPYTVKDIEGYLRKVL.

Positions 28–38 (KKGKDRPREDG) are enriched in basic and acidic residues. The segment at 28-52 (KKGKDRPREDGTQQQPSESKGEAAC) is disordered.

This is an uncharacterized protein from Dryophytes versicolor (chameleon treefrog).